The chain runs to 438 residues: Ornithine aminotransferase car2 (438 aa).

An N6-(pyridoxal phosphate)lysine modification is found at K275.

Belongs to the class-III pyridoxal-phosphate-dependent aminotransferase family. The cofactor is pyridoxal 5'-phosphate.

The protein resides in the cytoplasm. Its subcellular location is the nucleus. It catalyses the reaction a 2-oxocarboxylate + L-ornithine = L-glutamate 5-semialdehyde + an L-alpha-amino acid. It functions in the pathway amino-acid biosynthesis; L-proline biosynthesis; L-glutamate 5-semialdehyde from L-ornithine: step 1/1. This is Ornithine aminotransferase car2 (car2) from Schizosaccharomyces pombe (strain 972 / ATCC 24843) (Fission yeast).